We begin with the raw amino-acid sequence, 89 residues long: UPF0250 protein CV_3095 (89 aa).

The protein belongs to the UPF0250 family.

The sequence is that of UPF0250 protein CV_3095 from Chromobacterium violaceum (strain ATCC 12472 / DSM 30191 / JCM 1249 / CCUG 213 / NBRC 12614 / NCIMB 9131 / NCTC 9757 / MK).